Reading from the N-terminus, the 134-residue chain is Large ribosomal subunit protein bL20 (134 aa).

It belongs to the bacterial ribosomal protein bL20 family.

Its function is as follows. Binds directly to 23S ribosomal RNA and is necessary for the in vitro assembly process of the 50S ribosomal subunit. It is not involved in the protein synthesizing functions of that subunit. The polypeptide is Large ribosomal subunit protein bL20 (Rhizobium leguminosarum bv. trifolii (strain WSM2304)).